The following is a 95-amino-acid chain: Aspartyl/glutamyl-tRNA(Asn/Gln) amidotransferase subunit C (95 aa).

Belongs to the GatC family. Heterotrimer of A, B and C subunits.

It catalyses the reaction L-glutamyl-tRNA(Gln) + L-glutamine + ATP + H2O = L-glutaminyl-tRNA(Gln) + L-glutamate + ADP + phosphate + H(+). The enzyme catalyses L-aspartyl-tRNA(Asn) + L-glutamine + ATP + H2O = L-asparaginyl-tRNA(Asn) + L-glutamate + ADP + phosphate + 2 H(+). In terms of biological role, allows the formation of correctly charged Asn-tRNA(Asn) or Gln-tRNA(Gln) through the transamidation of misacylated Asp-tRNA(Asn) or Glu-tRNA(Gln) in organisms which lack either or both of asparaginyl-tRNA or glutaminyl-tRNA synthetases. The reaction takes place in the presence of glutamine and ATP through an activated phospho-Asp-tRNA(Asn) or phospho-Glu-tRNA(Gln). The chain is Aspartyl/glutamyl-tRNA(Asn/Gln) amidotransferase subunit C from Methylocella silvestris (strain DSM 15510 / CIP 108128 / LMG 27833 / NCIMB 13906 / BL2).